The following is a 207-amino-acid chain: Negative modulator of initiation of replication (207 aa).

Residues 43 to 54 (ATPITSSVTPSA) are compositionally biased toward polar residues. The disordered stretch occupies residues 43–63 (ATPITSSVTPSAPRQEAVNDE).

The protein belongs to the SeqA family. As to quaternary structure, homodimer. Polymerizes to form helical filaments.

The protein localises to the cytoplasm. Negative regulator of replication initiation, which contributes to regulation of DNA replication and ensures that replication initiation occurs exactly once per chromosome per cell cycle. Binds to pairs of hemimethylated GATC sequences in the oriC region, thus preventing assembly of replication proteins and re-initiation at newly replicated origins. Repression is relieved when the region becomes fully methylated. The sequence is that of Negative modulator of initiation of replication from Psychromonas ingrahamii (strain DSM 17664 / CCUG 51855 / 37).